Reading from the N-terminus, the 262-residue chain is Shikimate dehydrogenase (NADP(+)) (262 aa).

Shikimate-binding positions include Ser-15–Ser-17 and Thr-62. Residue Lys-66 is the Proton acceptor of the active site. Glu-78 serves as a coordination point for NADP(+). Shikimate-binding residues include Asn-87 and Asp-102. Residues Gly-126–Ala-130, Asn-150–Arg-155, and Met-214 contribute to the NADP(+) site. Tyr-216 contacts shikimate. Gly-236 is a binding site for NADP(+).

The protein belongs to the shikimate dehydrogenase family. In terms of assembly, homodimer.

It catalyses the reaction shikimate + NADP(+) = 3-dehydroshikimate + NADPH + H(+). The protein operates within metabolic intermediate biosynthesis; chorismate biosynthesis; chorismate from D-erythrose 4-phosphate and phosphoenolpyruvate: step 4/7. In terms of biological role, involved in the biosynthesis of the chorismate, which leads to the biosynthesis of aromatic amino acids. Catalyzes the reversible NADPH linked reduction of 3-dehydroshikimate (DHSA) to yield shikimate (SA). In Acinetobacter baumannii (strain AB307-0294), this protein is Shikimate dehydrogenase (NADP(+)).